The chain runs to 255 residues: Aliphatic sulfonates import ATP-binding protein SsuB (255 aa).

Residues 12-233 (LLLNAVSKHY…RLGSVRLAEL (222 aa)) enclose the ABC transporter domain. 44–51 (GRSGGGKS) contributes to the ATP binding site.

This sequence belongs to the ABC transporter superfamily. Aliphatic sulfonates importer (TC 3.A.1.17.2) family. As to quaternary structure, the complex is composed of two ATP-binding proteins (SsuB), two transmembrane proteins (SsuC) and a solute-binding protein (SsuA).

Its subcellular location is the cell inner membrane. The enzyme catalyses ATP + H2O + aliphatic sulfonate-[sulfonate-binding protein]Side 1 = ADP + phosphate + aliphatic sulfonateSide 2 + [sulfonate-binding protein]Side 1.. In terms of biological role, part of the ABC transporter complex SsuABC involved in aliphatic sulfonates import. Responsible for energy coupling to the transport system. This chain is Aliphatic sulfonates import ATP-binding protein SsuB, found in Shigella flexneri.